The following is a 347-amino-acid chain: Ketol-acid reductoisomerase (NADP(+)) (347 aa).

A KARI N-terminal Rossmann domain is found at 3 to 182; the sequence is TKMFYDKDID…GSGCAGILET (180 aa). NADP(+)-binding positions include 26 to 29, Arg49, Ser53, and 83 to 86; these read YGAQ and DELQ. His108 is a catalytic residue. Gly134 serves as a coordination point for NADP(+). Residues 183-328 enclose the KARI C-terminal knotted domain; that stretch reads TFEEETTEDL…KKVRAMMPWI (146 aa). Mg(2+)-binding residues include Asp191, Glu195, Glu227, and Glu231. Ser252 lines the substrate pocket.

This sequence belongs to the ketol-acid reductoisomerase family. Mg(2+) is required as a cofactor.

It carries out the reaction (2R)-2,3-dihydroxy-3-methylbutanoate + NADP(+) = (2S)-2-acetolactate + NADPH + H(+). It catalyses the reaction (2R,3R)-2,3-dihydroxy-3-methylpentanoate + NADP(+) = (S)-2-ethyl-2-hydroxy-3-oxobutanoate + NADPH + H(+). It functions in the pathway amino-acid biosynthesis; L-isoleucine biosynthesis; L-isoleucine from 2-oxobutanoate: step 2/4. The protein operates within amino-acid biosynthesis; L-valine biosynthesis; L-valine from pyruvate: step 2/4. Involved in the biosynthesis of branched-chain amino acids (BCAA). Catalyzes an alkyl-migration followed by a ketol-acid reduction of (S)-2-acetolactate (S2AL) to yield (R)-2,3-dihydroxy-isovalerate. In the isomerase reaction, S2AL is rearranged via a Mg-dependent methyl migration to produce 3-hydroxy-3-methyl-2-ketobutyrate (HMKB). In the reductase reaction, this 2-ketoacid undergoes a metal-dependent reduction by NADPH to yield (R)-2,3-dihydroxy-isovalerate. In Leuconostoc mesenteroides subsp. cremoris, this protein is Ketol-acid reductoisomerase (NADP(+)).